The chain runs to 105 residues: Large ribosomal subunit protein bL21 (105 aa).

This sequence belongs to the bacterial ribosomal protein bL21 family. As to quaternary structure, part of the 50S ribosomal subunit. Contacts protein L20.

In terms of biological role, this protein binds to 23S rRNA in the presence of protein L20. The polypeptide is Large ribosomal subunit protein bL21 (Phocaeicola vulgatus (strain ATCC 8482 / DSM 1447 / JCM 5826 / CCUG 4940 / NBRC 14291 / NCTC 11154) (Bacteroides vulgatus)).